Reading from the N-terminus, the 75-residue chain is Exodeoxyribonuclease 7 small subunit (75 aa).

This sequence belongs to the XseB family. As to quaternary structure, heterooligomer composed of large and small subunits.

It localises to the cytoplasm. It carries out the reaction Exonucleolytic cleavage in either 5'- to 3'- or 3'- to 5'-direction to yield nucleoside 5'-phosphates.. Its function is as follows. Bidirectionally degrades single-stranded DNA into large acid-insoluble oligonucleotides, which are then degraded further into small acid-soluble oligonucleotides. This is Exodeoxyribonuclease 7 small subunit from Nostoc punctiforme (strain ATCC 29133 / PCC 73102).